Reading from the N-terminus, the 212-residue chain is Adenylate kinase (212 aa).

An ATP-binding site is contributed by 10-15 (GSGKGT). The interval 30-59 (STGDLMRKEINDETPLGIECARYMNEGRLV) is NMP. AMP is bound by residues threonine 31, arginine 36, 57-59 (RLV), and glutamine 90. The LID stretch occupies residues 124–161 (GRLICPKCKVSYHIISRKPKLEGICDNDGTELVRRPDD). Arginine 125 lines the ATP pocket. The Zn(2+) site is built by cysteine 128 and cysteine 131. 134–135 (SY) lines the ATP pocket. Zn(2+) contacts are provided by cysteine 148 and aspartate 151. AMP contacts are provided by arginine 158 and arginine 169. Asparagine 198 contributes to the ATP binding site.

Belongs to the adenylate kinase family. Monomer.

It is found in the cytoplasm. It catalyses the reaction AMP + ATP = 2 ADP. The protein operates within purine metabolism; AMP biosynthesis via salvage pathway; AMP from ADP: step 1/1. Its function is as follows. Catalyzes the reversible transfer of the terminal phosphate group between ATP and AMP. Plays an important role in cellular energy homeostasis and in adenine nucleotide metabolism. The polypeptide is Adenylate kinase (Mesoplasma florum (strain ATCC 33453 / NBRC 100688 / NCTC 11704 / L1) (Acholeplasma florum)).